The chain runs to 166 residues: Cold-inducible RNA-binding protein (166 aa).

The region spanning 6–84 (GKLFVGGLNF…RQIRVDQAGK (79 aa)) is the RRM domain. A disordered region spans residues 68–166 (NGKSVDGRQI…DSYDSYTTQE (99 aa)). Residues 93-120 (YRGGSSGGRGFFRGGRGRGGGGDRGYGG) show a composition bias toward gly residues. A compositionally biased stretch (low complexity) spans 121–166 (SSRFENRSGGYQSSGSRDYYGRSHGSYGDRSGGSYRDSYDSYTTQE).

In terms of assembly, interacts with prmt1. Interacts with elavl1/elrA (via RRM3). Associates with ribosomes. Methylated on arginine residues within RGG motifs. Methylation by prmt1 promotes cytoplasmic accumulation.

Its subcellular location is the nucleus. The protein resides in the nucleoplasm. It is found in the cytoplasm. Functionally, cold-inducible mRNA binding protein. Acts cooperatively with elavl1/elrA to stabilize AU-rich element (ARE)-containing mRNAs by binding to themm and inhibiting their deadenylation. Essential for embryonic gastrulation and neural development, acting to maintain the expression of a set of adhesion molecules, and cell movement during embryogenesis. Required for pronephros development. This is Cold-inducible RNA-binding protein from Xenopus tropicalis (Western clawed frog).